Consider the following 473-residue polypeptide: Ribosomal RNA small subunit methyltransferase F (473 aa).

S-adenosyl-L-methionine-binding positions include 123–129, Glu147, Asp174, and Asp192; that span reads AAAPGSK. Cys245 (nucleophile) is an active-site residue.

It belongs to the class I-like SAM-binding methyltransferase superfamily. RsmB/NOP family.

The protein localises to the cytoplasm. The catalysed reaction is cytidine(1407) in 16S rRNA + S-adenosyl-L-methionine = 5-methylcytidine(1407) in 16S rRNA + S-adenosyl-L-homocysteine + H(+). Its function is as follows. Specifically methylates the cytosine at position 1407 (m5C1407) of 16S rRNA. The chain is Ribosomal RNA small subunit methyltransferase F from Vibrio cholerae serotype O1 (strain ATCC 39315 / El Tor Inaba N16961).